The primary structure comprises 150 residues: Ribosome maturation factor RimP (150 aa).

This sequence belongs to the RimP family.

It localises to the cytoplasm. Functionally, required for maturation of 30S ribosomal subunits. The chain is Ribosome maturation factor RimP from Francisella tularensis subsp. holarctica (strain LVS).